The sequence spans 192 residues: MEQSVRSIDGARSVAGAGRTIIDRESINQRALQLLQRNRQRRLLLKRSEDRARYIPERREQKRELDETLETRNVPQHHISAHERITKAKSHGSKYKPSDLALAEIRKYQRSTDLLISRMPFARLVKEVTDQFASDEEPLRWQSMAIMALQEASEAYLVGLLEHTNLLALHAKRITIMRKDMQLARRIRGQFI.

An H3-like region spans residues 88–190 (AKSHGSKYKP…MQLARRIRGQ (103 aa)).

Belongs to the histone H3 family. Component of centromeric nucleosomes, where DNA is wrapped around a histone octamer core. The octamer contains two molecules each of H2A, H2B, CSE4/CENPA and H4 assembled in one CSE4-H4 heterotetramer and two H2A-H2B heterodimers. Interacts with the inner kinetochore. Post-translationally, ubiquitinated. Is degraded through ubiquitin-mediated proteolysis when not protected by its association to the kinetochore.

Its subcellular location is the nucleus. The protein resides in the chromosome. The protein localises to the centromere. Functionally, histone H3-like nucleosomal protein that is specifically found in centromeric nucleosomes. Replaces conventional H3 in the nucleosome core of centromeric chromatin that serves as an assembly site for the inner kinetochore. Required for recruitment and assembly of kinetochore proteins, mitotic progression and chromosome segregation. May serve as an epigenetic mark that propagates centromere identity through replication and cell division. This chain is Histone H3-like centromeric protein CSE4 (CSE4), found in Kluyveromyces marxianus (Yeast).